Here is a 161-residue protein sequence, read N- to C-terminus: Allophycocyanin subunit alpha-B (161 aa).

Position 71 is an N4-methylasparagine (Asn-71). Cys-81 lines the (2R,3E)-phycocyanobilin pocket.

Belongs to the phycobiliprotein family. As to quaternary structure, heterohexamer of two alpha chains, one alpha-B chain and three beta chains. In terms of processing, contains one covalently linked bilin chromophore.

It is found in the cellular thylakoid membrane. Its function is as follows. Light-harvesting photosynthetic bile pigment-protein from the phycobiliprotein complex. Allophycocyanin has a maximum absorption at approximately 654 nanometers. The chain is Allophycocyanin subunit alpha-B (apcD) from Synechocystis sp. (strain ATCC 27184 / PCC 6803 / Kazusa).